A 172-amino-acid polypeptide reads, in one-letter code: ATP synthase subunit b (172 aa).

A helical membrane pass occupies residues 13 to 33 (GINGGDILFQLVMFLILLALL).

Belongs to the ATPase B chain family. F-type ATPases have 2 components, F(1) - the catalytic core - and F(0) - the membrane proton channel. F(1) has five subunits: alpha(3), beta(3), gamma(1), delta(1), epsilon(1). F(0) has three main subunits: a(1), b(2) and c(10-14). The alpha and beta chains form an alternating ring which encloses part of the gamma chain. F(1) is attached to F(0) by a central stalk formed by the gamma and epsilon chains, while a peripheral stalk is formed by the delta and b chains.

It localises to the cell membrane. In terms of biological role, f(1)F(0) ATP synthase produces ATP from ADP in the presence of a proton or sodium gradient. F-type ATPases consist of two structural domains, F(1) containing the extramembraneous catalytic core and F(0) containing the membrane proton channel, linked together by a central stalk and a peripheral stalk. During catalysis, ATP synthesis in the catalytic domain of F(1) is coupled via a rotary mechanism of the central stalk subunits to proton translocation. Component of the F(0) channel, it forms part of the peripheral stalk, linking F(1) to F(0). The sequence is that of ATP synthase subunit b from Priestia megaterium (strain ATCC 12872 / QMB1551) (Bacillus megaterium).